The following is a 37-amino-acid chain: Cytochrome b6-f complex subunit 5 (37 aa).

The chain crosses the membrane as a helical span at residues 5–25; it reads LLSGIVLGLVPVTIAGLFVTA.

The protein belongs to the PetG family. As to quaternary structure, the 4 large subunits of the cytochrome b6-f complex are cytochrome b6, subunit IV (17 kDa polypeptide, PetD), cytochrome f and the Rieske protein, while the 4 small subunits are PetG, PetL, PetM and PetN. The complex functions as a dimer.

The protein resides in the plastid. It localises to the chloroplast thylakoid membrane. Component of the cytochrome b6-f complex, which mediates electron transfer between photosystem II (PSII) and photosystem I (PSI), cyclic electron flow around PSI, and state transitions. PetG is required for either the stability or assembly of the cytochrome b6-f complex. In Chlamydomonas moewusii (Chlamydomonas eugametos), this protein is Cytochrome b6-f complex subunit 5.